Reading from the N-terminus, the 693-residue chain is Protein-glutamine gamma-glutamyltransferase E (693 aa).

At Tyr111 the chain carries Phosphotyrosine. Phosphothreonine is present on Thr112. The Ca(2+) site is built by Ala222, Asn225, Asn227, and Asp228. Cys273 is a catalytic residue. Residues Asp302, Asp304, Asn306, Ser308, and Asp325 each contribute to the Ca(2+) site. Active-site residues include His331 and Asp354. The Ca(2+) site is built by Asn394, Thr416, Glu444, and Glu449. The disordered stretch occupies residues 455–482 (KAMNKLKPNASFGATSSRGPQGEEKEPS).

Belongs to the transglutaminase superfamily. Transglutaminase family. Consists of two polypeptide chains, which are synthesized as a precursor form of a single polypeptide. Ca(2+) serves as cofactor. Post-translationally, activated by proteolytic processing. In vitro activation is commonly achieved by cleavage with dispase, a neutral bacterial protease. Physiological activation may be catalyzed by CTSL and, to a lesser extent, by CTSS.

The protein resides in the cytoplasm. It catalyses the reaction L-glutaminyl-[protein] + L-lysyl-[protein] = [protein]-L-lysyl-N(6)-5-L-glutamyl-[protein] + NH4(+). Functionally, catalyzes the calcium-dependent formation of isopeptide cross-links between glutamine and lysine residues in various proteins, as well as the conjugation of polyamines to proteins. Involved in the formation of the cornified envelope (CE), a specialized component consisting of covalent cross-links of proteins beneath the plasma membrane of terminally differentiated keratinocytes. Catalyzes small proline-rich proteins and LOR cross-linking to form small interchain oligomers, which are further cross-linked by TGM1 onto the growing CE scaffold. In hair follicles, involved in cross-linking structural proteins to hardening the inner root sheath. The polypeptide is Protein-glutamine gamma-glutamyltransferase E (Tgm3) (Rattus norvegicus (Rat)).